Consider the following 119-residue polypeptide: C-X-C motif chemokine 17 (119 aa).

Positions 1–22 (MKLLASPFLLLLPVMLMSMVFS) are cleaved as a signal peptide. The tract at residues 75–100 (CPCDHVKGREKKNRHQKHHRKSQRPS) is disordered. Intrachain disulfides connect C75–C103 and C77–C110. Basic residues predominate over residues 82–98 (GREKKNRHQKHHRKSQR).

The protein belongs to the intercrine alpha (chemokine CxC) family. Post-translationally, likely to undergo an endoproteolytic process to form a four-cysteine-containing mature peptide with a canonical CXC chemokine scaffold after secretion. In terms of tissue distribution, detected in lung, trachea, lung, tongue thyroid, submaxillary gland, epididymis, and uterus tissues and at a lower level in ovary, prostate and in intestinal tissues.

Its subcellular location is the secreted. Its function is as follows. Chemokine that acts as a chemoattractant for monocytes, macrophages and dendritic cells. Plays a role in angiogenesis and possibly in the development of tumors. Acts as an anti-inflammatory in the stomach. May play a role in the innate defense against infections. Activates the C-X-C chemokine receptor GPR35 to induce a rapid and transient rise in the level of intracellular calcium ions. This Mus musculus (Mouse) protein is C-X-C motif chemokine 17 (Cxcl17).